The sequence spans 261 residues: HLA class II histocompatibility antigen, DM alpha chain (261 aa).

The first 26 residues, 1 to 26, serve as a signal peptide directing secretion; the sequence is MGHEQNQGAALLQMLPLLWLLPHSWA. Positions 27-124 are alpha-1; the sequence is VPEAPTPMWP…KLDGKIPVSR (98 aa). At 27–233 the chain is on the lumenal side; that stretch reads VPEAPTPMWP…PSDLLENVLC (207 aa). The N-linked (GlcNAc...) asparagine glycan is linked to Asn41. 2 cysteine pairs are disulfide-bonded: Cys50–Cys105 and Cys147–Cys202. The Ig-like C1-type domain occupies 121–215; the sequence is PVSRGFPIAE…HEIDRYTAIA (95 aa). An alpha-2 region spans residues 125–217; sequence GFPIAEVFTL…IDRYTAIAYW (93 aa). Residues 218–233 form a connecting peptide region; it reads VPRNALPSDLLENVLC. The chain crosses the membrane as a helical span at residues 234–254; it reads GVAFGLGVLGIIVGIVLIIYF. The Cytoplasmic portion of the chain corresponds to 255–261; the sequence is RKPCSGD.

It belongs to the MHC class II family. As to quaternary structure, heterodimer of an alpha chain (DMA) and a beta chain (DMB). Interacts with MHCII; this interaction mediates rapid selection of high-affinity peptides in a pH-dependent manner, with an optimum at pH 5.5.

It is found in the late endosome membrane. The protein localises to the lysosome membrane. Plays a critical role in catalyzing the release of class II-associated invariant chain peptide (CLIP) from newly synthesized MHC class II molecules and freeing the peptide binding site for acquisition of antigenic peptides. In B-cells, the interaction between HLA-DM and MHC class II molecules is regulated by HLA-DO. This chain is HLA class II histocompatibility antigen, DM alpha chain (HLA-DMA), found in Homo sapiens (Human).